The sequence spans 310 residues: AT-hook motif nuclear-localized protein 15 (310 aa).

Disordered regions lie at residues 15–112 and 239–310; these read VESP…KESP and EEEQ…PPSY. Composition is skewed to polar residues over residues 31–41 and 51–67; these read SNNNNPPTMTR and TTNN…SQEE. The segment at residues 88–100 is a DNA-binding region (a.T hook); that stretch reads RRPRGRPPGSKNK. Residues 94–104 are compositionally biased toward low complexity; the sequence is PPGSKNKPKSP. The 140-residue stretch at 112–251 folds into the PPC domain; sequence PNSLQSHVLE…QQQEQPLQLE (140 aa). Residues 301–310 are compositionally biased toward pro residues; sequence GPPPRAPPSY.

The protein localises to the nucleus. In terms of biological role, transcription factor that specifically binds AT-rich DNA sequences related to the nuclear matrix attachment regions (MARs). Binds the DNA sequence GNFEI (GA-negative feedback element I) in the GA3OX1 promoter. Negatively regulates plant innate immunity (PTI) to pathogens through the down-regulation of the PAMP-triggered FRK1 expression. The sequence is that of AT-hook motif nuclear-localized protein 15 from Arabidopsis thaliana (Mouse-ear cress).